Reading from the N-terminus, the 204-residue chain is Minor allergen Cla h 7 (204 aa).

Residues 5–195 enclose the Flavodoxin-like domain; the sequence is IAIIFYSTWG…ELTAQGKAFY (191 aa).

The protein belongs to the WrbA family.

The protein resides in the cytoplasm. The protein is Minor allergen Cla h 7 (CLAH7) of Davidiella tassiana (Mycosphaerella tassiana).